Reading from the N-terminus, the 768-residue chain is Endoplasmin homolog (768 aa).

The first 28 residues, 1-28 (MKSITKIFLILGLFAFLLVAFAPSSSVA), serve as a signal peptide directing secretion. ATP-binding residues include N83, D127, N140, and F173. N83 is a glycosylation site (N-linked (GlcNAc...) asparagine). A compositionally biased stretch (basic and acidic residues) spans 266-276 (KEEQEDSKPIT). The tract at residues 266 to 308 (KEEQEDSKPITDDQVEETTTTTEEGEEETTTEEEGQTEEKKTK) is disordered. Residues 288-301 (EEGEEETTTEEEGQ) are compositionally biased toward acidic residues. N-linked (GlcNAc...) asparagine glycosylation is found at N317 and N423. Residues 733–743 (ETTKNENSGPS) are compositionally biased toward polar residues. The segment at 733-768 (ETTKNENSGPSVSFGDDDENQQQDFQQPPQSTHDEL) is disordered. The Prevents secretion from ER motif lies at 765–768 (HDEL).

It belongs to the heat shock protein 90 family. Phosphorylated.

Its subcellular location is the endoplasmic reticulum. The protein localises to the golgi apparatus. Its function is as follows. May play a role in late differentiation as well as in starvation response. When overexpressed, suppresses the ability to form normal fruiting bodies and impairs prespore differentiation as well as maturation into spores. This chain is Endoplasmin homolog (grp94), found in Dictyostelium discoideum (Social amoeba).